A 533-amino-acid chain; its full sequence is uncharacterized protein (533 aa).

The signal sequence occupies residues Met1–Ala21. Cys22 carries N-palmitoyl cysteine lipidation. Cys22 carries S-diacylglycerol cysteine lipidation. The tract at residues Leu91–Thr111 is disordered. A compositionally biased stretch (polar residues) spans Gly97–Thr111.

This sequence belongs to the MG067/MG068/MG395 family.

The protein resides in the cell membrane. This is an uncharacterized protein from Mycoplasma pneumoniae (strain ATCC 29342 / M129 / Subtype 1) (Mycoplasmoides pneumoniae).